The primary structure comprises 54 residues: Large ribosomal subunit protein bL33 (54 aa).

Belongs to the bacterial ribosomal protein bL33 family.

The sequence is that of Large ribosomal subunit protein bL33 from Petrotoga mobilis (strain DSM 10674 / SJ95).